The primary structure comprises 128 residues: MIRSAVVLTVLVGVCLAQRGFVGGWSQVDPKIRPDLLELAHFAVASQTAGLEYYHTVLELTKASQQVVAGVNYKLTLKVAPSKCKVSETVYSKELCQPQLNAAPKDCEAQLYVVPWRNTKEVTSFECN.

Residues 1–17 form the signal peptide; sequence MIRSAVVLTVLVGVCLA. The region spanning 20-128 is the Cystatin domain; sequence GFVGGWSQVD…TKEVTSFECN (109 aa). 2 disulfides stabilise this stretch: Cys84–Cys96 and Cys107–Cys127.

Belongs to the cystatin family. Mainly expressed in gut.

It is found in the secreted. Inhibitor of cysteine proteinases. Strongly inhibits mammalian cathepsin B and H, and moderately inhibits mammalian cathepsin C. Also inhibits endogenous cathepsin B-like but not cathepsin C-like proteinases. May have a protective role against undesired digestion of a stored blood meal by endogenous peptidases. The sequence is that of Cystatin-1 from Ornithodoros moubata (Soft tick).